We begin with the raw amino-acid sequence, 369 residues long: Chaperone protein DnaJ (369 aa).

A J domain is found at aspartate 5–glycine 69. Residues glycine 131 to lysine 213 form a CR-type zinc finger. 8 residues coordinate Zn(2+): cysteine 144, cysteine 147, cysteine 161, cysteine 164, cysteine 187, cysteine 190, cysteine 201, and cysteine 204. 4 CXXCXGXG motif repeats span residues cysteine 144 to glycine 151, cysteine 161 to glycine 168, cysteine 187 to glycine 194, and cysteine 201 to glycine 208.

Belongs to the DnaJ family. As to quaternary structure, homodimer. Zn(2+) serves as cofactor.

The protein resides in the cytoplasm. In terms of biological role, participates actively in the response to hyperosmotic and heat shock by preventing the aggregation of stress-denatured proteins and by disaggregating proteins, also in an autonomous, DnaK-independent fashion. Unfolded proteins bind initially to DnaJ; upon interaction with the DnaJ-bound protein, DnaK hydrolyzes its bound ATP, resulting in the formation of a stable complex. GrpE releases ADP from DnaK; ATP binding to DnaK triggers the release of the substrate protein, thus completing the reaction cycle. Several rounds of ATP-dependent interactions between DnaJ, DnaK and GrpE are required for fully efficient folding. Also involved, together with DnaK and GrpE, in the DNA replication of plasmids through activation of initiation proteins. The protein is Chaperone protein DnaJ of Acholeplasma laidlawii.